We begin with the raw amino-acid sequence, 172 residues long: uncharacterized protein (172 aa).

Positions 1–29 (MKKKQVMLALTAAAGLGLTALHSAPAAKA) are cleaved as a signal peptide. 2 consecutive SH3b domains span residues 42-105 (SDTY…MKTA) and 112-172 (KQTA…LQMR).

This is an uncharacterized protein from Bacillus subtilis (strain 168).